Here is a 193-residue protein sequence, read N- to C-terminus: Imidazoleglycerol-phosphate dehydratase (193 aa).

The protein belongs to the imidazoleglycerol-phosphate dehydratase family.

The protein resides in the cytoplasm. The enzyme catalyses D-erythro-1-(imidazol-4-yl)glycerol 3-phosphate = 3-(imidazol-4-yl)-2-oxopropyl phosphate + H2O. Its pathway is amino-acid biosynthesis; L-histidine biosynthesis; L-histidine from 5-phospho-alpha-D-ribose 1-diphosphate: step 6/9. This chain is Imidazoleglycerol-phosphate dehydratase (hisB), found in Saccharolobus solfataricus (strain ATCC 35092 / DSM 1617 / JCM 11322 / P2) (Sulfolobus solfataricus).